Reading from the N-terminus, the 1007-residue chain is MEQAGTRPAATEHPRLRRPMPWLLLLPLLLLLLLLLPGPAASQLRYSVPEEQAPGALVGNVARALGLELRRLGPGCLRINHLGAPSPRYLELDLTSGALFVNERIDREALCEQRPRCLLSLEVLAHNPVAVSAVEVEILDINDNSPRFPRPNYQLQVSESVAPGARFHIESAQDPDVGANSVQTYELSPSEHFELDLKPLQENSKVLELVLRKGLDREQAALHHLVLTAVDGGIPARSGTAQISVRVLDTNDNSPAFDQSTYRVQLREDSPPGTLVVKLNASDPDEGSNGELRYSLSSYTSDRERQLFSIDASTGEVRVIGGLDYEEASSYQIYVQATDRGPVPMAGHCKVLVDIVDVNDNAPEVVLTDLYSPVPENATPNTIVAVLSVNDQDSGPNRKVSLGLEATLPFRLNGFGNSYTLVVSGPLDRERVAVYNITVTATDGGIPQLTSLRTLKVEISDINDNPPSFLEDSYSIYIQENNLPGVLLCTVQATDPDEKENAEVTYSLLEREIQGLPVTSYVSINSASGSLYAVNSFDYEKFREFFVTVEAQDKGSPPLSSTVTANVYVVDMNDHAPHILYPTSTNSSAAFEMVPRTAPAGYLVTKVIAMDSDSGQNAWLFYHLAQTSDLDLFKVELHTGEIRTTRKMGDESGSTFNLTVVVRDNGEPSLSASVAITVAVVDRVSKILPDTQRHVKSPRTYSEITLYLIIALSTVSFIFLLTIIILSIIKCYRYTAYGTACCGGFCGVRERSPAELYKQANNNIDARIPHGLKVQPHFIEVRGNGSLTKTYCYKACLTAGSGSDTFMFYNTGAQTGPGPSGAQAAVTDSRNLTGQSGQNAGNLIILKNEAVSQNEPRQPNPDWRYSASLRAGMHSSVHLEEAGILRAGPGGPDQQWPTVSSATPEPEAGEVSPPVGAGVNSNSWTFKYGPGNPKQSGPGELPDKFIIPGSPAIISIRQEPTNSQIDKSDFITFGKKEETKKKKKKKKGNKTQEKKEKGNSTTDNSDQ.

The signal sequence occupies residues 1–42 (MEQAGTRPAATEHPRLRRPMPWLLLLPLLLLLLLLLPGPAAS). 5 consecutive Cadherin domains span residues 43–148 (QLRY…SPRF), 149–257 (PRPN…SPAF), 258–365 (DQST…APEV), 374–469 (VPEN…PPSF), and 470–579 (LEDS…APHI). The Extracellular segment spans residues 43–708 (QLRYSVPEEQ…RTYSEITLYL (666 aa)). N-linked (GlcNAc...) asparagine glycans are attached at residues asparagine 280 and asparagine 436. N-linked (GlcNAc...) asparagine glycans are attached at residues asparagine 586 and asparagine 657. The Cadherin 6 domain maps to 594 to 691 (VPRTAPAGYL…DRVSKILPDT (98 aa)). A helical membrane pass occupies residues 709 to 729 (IIALSTVSFIFLLTIIILSII). The Cytoplasmic segment spans residues 730–1007 (KCYRYTAYGT…GNSTTDNSDQ (278 aa)). 4 PXXP repeats span residues 856–859 (PRQP), 889–892 (PGGP), 930–933 (PGNP), and 948–951 (PGSP). Positions 856–951 (PRQPNPDWRY…PDKFIIPGSP (96 aa)) are 4 X 4 AA repeats of P-X-X-P. Positions 885-1007 (LRAGPGGPDQ…GNSTTDNSDQ (123 aa)) are disordered. The span at 966–980 (DKSDFITFGKKEETK) shows a compositional bias: basic and acidic residues.

It localises to the cell membrane. Functionally, potential calcium-dependent cell-adhesion protein. May be involved in the establishment and maintenance of specific neuronal connections in the brain. This is Protocadherin alpha-C2 (PCDHAC2) from Homo sapiens (Human).